We begin with the raw amino-acid sequence, 339 residues long: 2-oxoisovalerate dehydrogenase subunit beta (339 aa).

In terms of assembly, heterodimer of an alpha and a beta chain. The cofactor is thiamine diphosphate.

The catalysed reaction is N(6)-[(R)-lipoyl]-L-lysyl-[protein] + 3-methyl-2-oxobutanoate + H(+) = N(6)-[(R)-S(8)-2-methylpropanoyldihydrolipoyl]-L-lysyl-[protein] + CO2. Functionally, the branched-chain alpha-keto dehydrogenase complex catalyzes the overall conversion of alpha-keto acids to acyl-CoA and CO(2). It contains multiple copies of three enzymatic components: branched-chain alpha-keto acid decarboxylase (E1), lipoamide acyltransferase (E2) and lipoamide dehydrogenase (E3). This chain is 2-oxoisovalerate dehydrogenase subunit beta (bkdA2), found in Pseudomonas putida (Arthrobacter siderocapsulatus).